A 299-amino-acid polypeptide reads, in one-letter code: Probable lipid kinase YegS (299 aa).

The DAGKc domain maps to 2–133; sequence AEFPASLLIL…IDMAQVNKQT (132 aa). ATP-binding positions include Thr-40, 66-72, and Thr-95; that span reads GDGTINE. Mg(2+) contacts are provided by Leu-215, Asp-218, and Leu-220. Glu-271 acts as the Proton acceptor in catalysis.

This sequence belongs to the diacylglycerol/lipid kinase family. YegS lipid kinase subfamily. The cofactor is Mg(2+). Ca(2+) serves as cofactor.

The protein localises to the cytoplasm. Functionally, probably phosphorylates lipids; the in vivo substrate is unknown. This Escherichia coli (strain K12 / MC4100 / BW2952) protein is Probable lipid kinase YegS.